Consider the following 352-residue polypeptide: Fatty acid synthase (352 aa).

The Ketosynthase family 3 (KS3) domain maps to 1–352 (MEDVVIAGIA…KVVLSLEHGL (352 aa)). Catalysis depends on for beta-ketoacyl synthase activity residues Cys-161, His-293, and His-331.

As to quaternary structure, homodimer which monomers are arranged in a head to tail fashion.

The enzyme catalyses acetyl-CoA + n malonyl-CoA + 2n NADPH + 2n H(+) = a long-chain fatty acid + (n+1) CoA + n CO2 + 2n NADP(+).. Its function is as follows. Fatty acid synthetase catalyzes the formation of long-chain fatty acids from acetyl-CoA, malonyl-CoA and NADPH. This multifunctional protein has 7 catalytic activities as an acyl carrier protein. This chain is Fatty acid synthase (FASN), found in Anser anser anser (Western greylag goose).